The primary structure comprises 729 residues: Denticleless protein homolog (729 aa).

Position 1 is an N-acetylmethionine (methionine 1). WD repeat units follow at residues 47-89 (GVPV…SKKT), 96-135 (AHWNAVFDLAWVPGELKLVTAAGDQTAKFWDVRAGELMGT), and 138-178 (GHQC…KDGF). The short motif at 168–171 (WDTR) is the DDB1-binding motif element. Over residues 189-198 (HNTADKQTPS) the composition is skewed to polar residues. The disordered stretch occupies residues 189–212 (HNTADKQTPSKPKKKQNSKGLAPA). Threonine 196 is modified (phosphothreonine). The Nuclear localization signal signature appears at 197 to 203 (PSKPKKK). WD repeat units follow at residues 214–253 (DSQQSVTVVLFQDENTLVSAGAVDGIIKVWDLRKNYTAYR), 269–308 (TRKLGYSSLVLDSTGSTLFANCTDDNIYMFNMTGLKTSPV), 313–354 (GHQN…HPPT), and 358–398 (GHSQ…EEKP). The DDB1-binding motif signature appears at 243-246 (WDLR). 2 positions are modified to phosphoserine: serine 409 and serine 425. 2 disordered regions span residues 416–445 (KACPVTVPSSQSTPAKAPRAKSSPSISSPS) and 460–491 (PSSTPTFSVKTTPATTRSSVSRRGSISSVSPK). Residues 427-445 (STPAKAPRAKSSPSISSPS) show a composition bias toward low complexity. Polar residues predominate over residues 460 to 475 (PSSTPTFSVKTTPATT). Position 463 is a phosphothreonine; by CDK1 and CDK2 (threonine 463). Low complexity predominate over residues 476–491 (RSSVSRRGSISSVSPK). Serine 484, serine 489, serine 494, and serine 511 each carry phosphoserine. The disordered stretch occupies residues 504-546 (VTRTPSSSPPVTPPASETKISSPRKALIPVSQKSSQADACSES). The residue at position 515 (threonine 515) is a Phosphothreonine. Position 556 is a phosphoserine (serine 556). Over residues 596-607 (VLSQDSEGPTKS) the composition is skewed to polar residues. The disordered stretch occupies residues 596–705 (VLSQDSEGPT…GPVTITPSSM (110 aa)). Composition is skewed to low complexity over residues 630–645 (EGCGPLPLPLRPCGEG) and 674–688 (SSPRSPSSQTPSSRR). Serine 675 and serine 678 each carry phosphoserine. Residues threonine 683 and threonine 701 each carry the phosphothreonine modification.

It belongs to the WD repeat cdt2 family. In terms of assembly, component of the DCX(DTL) E3 ubiquitin ligase complex (also called CRL4(CDT2)), at least composed of CUL4 (CUL4A or CUL4B), DDB1, DTL/CDT2 and RBX1. Interacts with CDKN1A and DDB1. Interacts with FBXO11; SCF(FBXWO11) controls DTL stability but DCX(DTL) does not control FBXO11 stability. Interacts with CRY1. Ubiquitinated by the anaphase promoting complex/cyclosome (APC/C). Autoubiquitinated through 'Lys-48'-polyubiquitin chains in a PCNA-independent reaction, allowing proteasomal turnover. Polyubiquitinated by SCF(FBXO11) when not phosphorylated, leading to its degradation. A tight regulation of the polyubiquitination by SCF(FBXO11) is involved in the control of different processes such as TGF-beta signaling, cell cycle progression and exit. Post-translationally, phosphorylated at Thr-463 by CDK1/Cyclin B and CDK2/Cycnlin A but not by CDK2/Cyclin E, MAPK1 or PLK1. Phosphorylation at Thr-463 inhibits the interaction with FBXO11 and decreases upon cell cycle exit induced by TGF-beta or serum starvation.

It localises to the nucleus. Its subcellular location is the nucleus membrane. The protein localises to the cytoplasm. The protein resides in the cytoskeleton. It is found in the microtubule organizing center. It localises to the centrosome. Its subcellular location is the chromosome. It participates in protein modification; protein ubiquitination. Its function is as follows. Substrate-specific adapter of a DCX (DDB1-CUL4-X-box) E3 ubiquitin-protein ligase complex required for cell cycle control, DNA damage response and translesion DNA synthesis. The DCX(DTL) complex, also named CRL4(CDT2) complex, mediates the polyubiquitination and subsequent degradation of CDT1, CDKN1A/p21(CIP1), FBH1, KMT5A and SDE2. CDT1 degradation in response to DNA damage is necessary to ensure proper cell cycle regulation of DNA replication. CDKN1A/p21(CIP1) degradation during S phase or following UV irradiation is essential to control replication licensing. KMT5A degradation is also important for a proper regulation of mechanisms such as TGF-beta signaling, cell cycle progression, DNA repair and cell migration. Most substrates require their interaction with PCNA for their polyubiquitination: substrates interact with PCNA via their PIP-box, and those containing the 'K+4' motif in the PIP box, recruit the DCX(DTL) complex, leading to their degradation. In undamaged proliferating cells, the DCX(DTL) complex also promotes the 'Lys-164' monoubiquitination of PCNA, thereby being involved in PCNA-dependent translesion DNA synthesis. The DDB1-CUL4A-DTL E3 ligase complex regulates the circadian clock function by mediating the ubiquitination and degradation of CRY1. The protein is Denticleless protein homolog (Dtl) of Mus musculus (Mouse).